A 115-amino-acid polypeptide reads, in one-letter code: Ribonuclease P protein component (115 aa).

The protein belongs to the RnpA family. As to quaternary structure, consists of a catalytic RNA component (M1 or rnpB) and a protein subunit.

It catalyses the reaction Endonucleolytic cleavage of RNA, removing 5'-extranucleotides from tRNA precursor.. Its function is as follows. RNaseP catalyzes the removal of the 5'-leader sequence from pre-tRNA to produce the mature 5'-terminus. It can also cleave other RNA substrates such as 4.5S RNA. The protein component plays an auxiliary but essential role in vivo by binding to the 5'-leader sequence and broadening the substrate specificity of the ribozyme. The chain is Ribonuclease P protein component from Baumannia cicadellinicola subsp. Homalodisca coagulata.